The chain runs to 631 residues: MKSVILKPKNLVLLGAGVTTTYYLYKFFSAPSVSKDEGDKFGFNAPDPAALARAAVKEKKERFVKPSDNVCPILILYGTEYGLSAEVAKKLEESINSKLEGFWARIIDMEEYEIIEFEKEQIVLIITSTYGDGVPPTTARPFFDYLEANRLNLSHIQFSVLALGDRSYPHYCAAGKTLDKQFEEMGAKRFRDRIEVDQEDWTCFDRYIDTVCGLVPTLGGVEKREGQDYLYEKAKLFALSQGKYNKKKPYSSKLLVKRVLTKGDKVGIHLEFELGDSELKYVPGDALAILPDNAASEVSAIISLLKLSPSFKVSTPGWHYQEGEQPNPSQITLTHILTKCFDIHNCKPELLQLLKDNVKNQQEKEKLTNLLAQGTGKSNTQLVEFLENHHLIDILKMFSSARPPIDDLLAQLAKLLPRYYSIASSMSENKLAVSLCVAVVKYDLHGSERVGIASTHMADRMNVGDRVSIFINNNPDFRLPEDPTTPILMVGPGTGIAPFVSFIQERKALGHTGENHLYFGCRRSDEDFLYSKELQQYHNDGLIKLYTAFSRETSQKVYVQNRLLENSQQICDLINAGGHIYICGDAKSMAPQVHETLSLIITKHMSIDEADAQALLHKLEKEKRYQKDVWF.

In terms of domain architecture, Flavodoxin-like spans 73-212 (ILILYGTEYG…CFDRYIDTVC (140 aa)). Residues 79-83 (TEYGL) and 160-191 (VLAL…KRFR) contribute to the FMN site. The region spanning 247 to 480 (KKPYSSKLLV…INNNPDFRLP (234 aa)) is the FAD-binding FR-type domain. FAD is bound at residue 249–299 (PYSSKLLVKRVLTKGDKVGIHLEFELGDSELKYVPGDALAILPDNAASEVS). 504–630 (QERKALGHTG…KEKRYQKDVW (127 aa)) lines the NADP(+) pocket.

FAD is required as a cofactor. The cofactor is FMN.

Probable NADPH oxidoreductase that controls development beyond the mound stage. This Dictyostelium discoideum (Social amoeba) protein is NADPH oxidoreductase A (redA).